The chain runs to 363 residues: rRNA processing protein rcl1 (363 aa).

The protein belongs to the RNA 3'-terminal cyclase family. Type 2 subfamily. Interacts directly with bms1 and the U3 snoRNA to form a stable subcomplex. Component of the 90S small subunit processome also known as 90S pre-ribosome that consists of the 35S pre-rRNA, early-associating ribosomal proteins most of which are part of the small ribosomal subunit, the U3 snoRNA and associated proteins.

The protein resides in the nucleus. It is found in the nucleolus. Does not have cyclase activity. Plays a role in 40S-ribosomal-subunit biogenesis in the early pre-rRNA processing steps at sites A0, A1 and A2 that are required for proper maturation of the 18S RNA. Rcl1 activates bms1 by promoting GDP/GTP exchange. This is rRNA processing protein rcl1 (rcl1) from Schizosaccharomyces pombe (strain 972 / ATCC 24843) (Fission yeast).